A 176-amino-acid chain; its full sequence is RNA polymerase sigma factor SigZ (176 aa).

Positions 30-43 (DLLQIVFMKIQVHL) match the Polymerase core binding motif. A DNA-binding region (H-T-H motif) is located at residues 125 to 144 (QKELSEKLGISYSGAKSRVQ).

It belongs to the sigma-70 factor family. ECF subfamily.

Sigma factors are initiation factors that promote the attachment of RNA polymerase to specific initiation sites and are then released. The chain is RNA polymerase sigma factor SigZ (sigZ) from Bacillus subtilis (strain 168).